A 127-amino-acid polypeptide reads, in one-letter code: uncharacterized protein (127 aa).

Transmembrane regions (helical) follow at residues 48–68 (LYSL…PLSI) and 83–103 (VFLF…CLID).

The protein localises to the membrane. This is an uncharacterized protein from Saccharomyces cerevisiae (strain ATCC 204508 / S288c) (Baker's yeast).